The following is a 127-amino-acid chain: Large ribosomal subunit protein bL19 (127 aa).

It belongs to the bacterial ribosomal protein bL19 family.

In terms of biological role, this protein is located at the 30S-50S ribosomal subunit interface and may play a role in the structure and function of the aminoacyl-tRNA binding site. In Myxococcus xanthus (strain DK1622), this protein is Large ribosomal subunit protein bL19.